An 829-amino-acid chain; its full sequence is Probable beta-glucosidase H (829 aa).

Residue Asp-225 is part of the active site. Positions 389–548 (RMLSNAVIRF…DPEQMVRDAV (160 aa)) constitute a PA14 domain. 5 N-linked (GlcNAc...) asparagine glycosylation sites follow: Asn-416, Asn-431, Asn-473, Asn-602, and Asn-627.

It belongs to the glycosyl hydrolase 3 family.

Its subcellular location is the secreted. The enzyme catalyses Hydrolysis of terminal, non-reducing beta-D-glucosyl residues with release of beta-D-glucose.. It participates in glycan metabolism; cellulose degradation. Beta-glucosidases are one of a number of cellulolytic enzymes involved in the degradation of cellulosic biomass. Catalyzes the last step releasing glucose from the inhibitory cellobiose. In Aspergillus clavatus (strain ATCC 1007 / CBS 513.65 / DSM 816 / NCTC 3887 / NRRL 1 / QM 1276 / 107), this protein is Probable beta-glucosidase H (bglH).